Here is a 141-residue protein sequence, read N- to C-terminus: NADPH-dependent 7-cyano-7-deazaguanine reductase (141 aa).

C34 (thioimide intermediate) is an active-site residue. The active-site Proton donor is the D41. Substrate is bound by residues 56-58 (VEL) and 75-76 (HE).

Belongs to the GTP cyclohydrolase I family. QueF type 1 subfamily.

Its subcellular location is the cytoplasm. It carries out the reaction 7-aminomethyl-7-carbaguanine + 2 NADP(+) = 7-cyano-7-deazaguanine + 2 NADPH + 3 H(+). Its pathway is tRNA modification; tRNA-queuosine biosynthesis. Its function is as follows. Catalyzes the NADPH-dependent reduction of 7-cyano-7-deazaguanine (preQ0) to 7-aminomethyl-7-deazaguanine (preQ1). The protein is NADPH-dependent 7-cyano-7-deazaguanine reductase of Acidithiobacillus ferrooxidans (strain ATCC 23270 / DSM 14882 / CIP 104768 / NCIMB 8455) (Ferrobacillus ferrooxidans (strain ATCC 23270)).